A 338-amino-acid polypeptide reads, in one-letter code: UPF0194 membrane protein in asrC 5'region (338 aa).

The signal sequence occupies residues 1–23; it reads MAISPKKRALALVVVLIVAGAVA. Residues 148–207 adopt a coiled-coil conformation; the sequence is KQSLDNAAAALKTARANLDRAQQALTLAIKGPRKEDIAAARQQLQADKAGLSLARRELTD.

This sequence belongs to the UPF0194 family.

Its subcellular location is the periplasm. This is UPF0194 membrane protein in asrC 5'region from Acidithiobacillus ferridurans.